The following is an 853-amino-acid chain: Transforming growth factor beta receptor type 3 (853 aa).

The signal sequence occupies residues 1–23; that stretch reads MAVTSHHMIPVMVVLMSACLATA. The Extracellular segment spans residues 24–789; the sequence is GPEPSTRCEL…IFHGLDTLTV (766 aa). Asparagine 37, asparagine 144, and asparagine 493 each carry an N-linked (GlcNAc...) asparagine glycan. The cysteines at positions 55 and 200 are disulfide-linked. The 275-residue stretch at 456 to 730 folds into the ZP domain; that stretch reads KCDHEKMVVA…PRCVTPDDAC (275 aa). The disordered stretch occupies residues 530–559; it reads SPGDSSGWPDGYEDLESGDNGFPGDGDEGE. O-linked (Xyl...) (glycosaminoglycan) serine glycosylation is found at serine 535 and serine 546. N-linked (GlcNAc...) asparagine glycans are attached at residues asparagine 572, asparagine 591, and asparagine 698. Cystine bridges form between cysteine 640-cysteine 706, cysteine 661-cysteine 730, and cysteine 711-cysteine 723. The segment at 737-751 is interaction with TGF-beta ligand; that stretch reads MIWTMMQNKKTFTKP. The chain crosses the membrane as a helical span at residues 790–811; that stretch reads MGIAFAAFVIGALLTGALWYIY. The Cytoplasmic portion of the chain corresponds to 812–853; it reads SHTGETARRQQVPTSPPASENSSAAHSIGSTQSTPCSSSSTA. The segment covering 820–836 has biased composition (polar residues); that stretch reads RQQVPTSPPASENSSAA. The tract at residues 820–853 is disordered; the sequence is RQQVPTSPPASENSSAAHSIGSTQSTPCSSSSTA. Residues 838–853 show a composition bias toward low complexity; sequence SIGSTQSTPCSSSSTA. Threonine 842 carries the post-translational modification Phosphothreonine.

As to quaternary structure, forms homodimers and homooligomers. Interacts with DYNLT4. Interacts with integrin ITGA5:ITGB1; this interaction promotes the internalization and trafficking of ITGA5:ITGB1 into endocytic vesicles. Interacts with TGFB1, BMP2, BMP5, BMP7 or GDF5 and inhibin A via the ligand binding domains. Interacts with ALK3/BMPR1A; this interaction results in the cell surface retention of BMPR1A. Interacts with ALK6/BMPR1B; this interaction enhances BMPR1B-mediated stimulation of the BMP signaling pathway. Interacts with the scaffolding protein beta-arrestin2/ARRB2; this interaction mediates internalization of TGFBR3 and thus regulates migration, actin cytoskeleton and activation of CDC42. Extensively modified by glycosaminoglycan groups (GAG). Post-translationally, phosphorylated in the cytoplasmic domain by the type II receptor TGFBR2 at THR-842 to mediate recruitment of ARRB2 and subsequent internalization of TGFBR2 and TGFBR3.

The protein localises to the cell membrane. Its subcellular location is the secreted. It is found in the extracellular space. The protein resides in the extracellular matrix. Its function is as follows. Cell surface receptor that regulates diverse cellular processes including cell proliferation, differentiation, migration, and apoptosis. Initiates BMP, inhibin, and TGF-beta signaling pathways by interacting with different ligands including TGFB1, BMP2, BMP5, BMP7 or GDF5. Alternatively, acts as a cell surface coreceptor for BMP ligands, serving to enhance ligand binding by differentially regulating BMPR1A/ALK3 and BMPR1B/ALK6 receptor trafficking. Promotes epithelial cell adhesion, focal adhesion formation and integrin signaling during epithelial cell spreading on fibronectin. By interacting with the scaffolding protein beta-arrestin2/ARRB2, regulates migration or actin cytoskeleton and promotes the activation of CDC42 as well as the inhibition of NF-kappa-B. In gonadotrope cells, acts as an inhibin A coreceptor and regulates follicle-stimulating hormone (FSH) levels and female fertility. Plays a role in the inhibition of directed and random cell migration in epithelial cells by altering the actin cytoskeletal organization. Participates in epithelial-mesenchymal transformation (EMT) upon binding to BMP2 or TGFB2, by activating the PAR6/SMURF1/RHOA pathway. The chain is Transforming growth factor beta receptor type 3 (Tgfbr3) from Rattus norvegicus (Rat).